The sequence spans 430 residues: Small ribosomal subunit protein uS5m (430 aa).

A disordered region spans residues A108–R128. The segment covering R111–D125 has biased composition (basic residues). Positions F218–I282 constitute an S5 DRBM domain.

The protein belongs to the universal ribosomal protein uS5 family. In terms of assembly, component of the mitochondrial ribosome small subunit (28S) which comprises a 12S rRNA and about 30 distinct proteins.

Its subcellular location is the mitochondrion. This chain is Small ribosomal subunit protein uS5m (MRPS5), found in Bos taurus (Bovine).